Consider the following 186-residue polypeptide: UPF0301 protein Neut_0448 (186 aa).

The protein belongs to the UPF0301 (AlgH) family.

This Nitrosomonas eutropha (strain DSM 101675 / C91 / Nm57) protein is UPF0301 protein Neut_0448.